The following is a 756-amino-acid chain: MDSGRDFLTLHGLQDDEDLQALLKGSQLLKVKSSSWRRERFYKLQEDCKTIWQESRKVMRTPESQLFSIEDIQEVRMGHRTEGLEKFARDVPEDRCFSIVFKDQRNTLDLIAPSPADAQHWVLGLHKIIHHSGSMDQRQKLQHWIHSCLRKADKNKDNKMSFKELQNFLKELNIQVDDSYARKIFRECDHSQTDSLEDEEIEAFYKMLTQRVEIDRTFAEAAGSGETLSVDQLVTFLQHQQREEAAGPALALSLIERYEPSETAKAQRQMTKDGFLMYLLSADGSAFSLAHRRVYQDMGQPLSHYLVSSSHNTYLLEDQLAGPSSTEAYIRALCKGCRCLELDCWDGPNQEPIIYHGYTFTSKILFCDVLRAIRDYAFKASPYPVILSLENHCTLEQQRVMARHLHAILGPMLLNRPLDGVTNSLPSPEQLKGKILLKGKKLGGLLPPGGEGGPEATVVSDEDEAAEMEDEAVRSRVQHKPKEDKLRLAQELSDMVIYCKSVHFGGFSSPGTPGQAFYEMASFSENRALRLLQESGNGFVRHNVGHLSRIYPAGWRTDSSNYSPVEMWNGGCQIVALNFQTPGPEMDVYQGRFQDNGACGYVLKPAFLRDPNGTFNPRALAQGPWWARKRLNIRVISGQQLPKVNKNKNSIVDPKVTVEIHGVSRDVASRQTAVITNNGFNPWWDTEFAFEVVVPDLALIRFLVEDYDASSKNDFIGQSTIPLNSLKQGYRHVHLMSKNGDQHPSATLFVKISLQD.

A PH domain is found at 21–130 (ALLKGSQLLK…WVLGLHKIIH (110 aa)). The tract at residues 30–57 (KVKSSSWRRERFYKLQEDCKTIWQESRK) is substrate binding. EF-hand domains lie at 140–175 (KLQH…LNIQ) and 176–211 (VDDS…LTQR). Residues Asp153, Asn155, Asp157, Lys159, Glu164, Asp189, Ser191, Thr193, Ser195, and Glu200 each coordinate Ca(2+). Residue Ser191 is glycosylated (O-linked (GlcNAc) serine). An O-linked (GlcNAc) threonine glycan is attached at Thr193. Residues 296–440 (QDMGQPLSHY…LKGKILLKGK (145 aa)) enclose the PI-PLC X-box domain. His311 is a catalytic residue. Ca(2+)-binding residues include Asn312, Glu341, and Asp343. The active site involves His356. Residue Glu390 participates in Ca(2+) binding. 2 residues coordinate substrate: Lys438 and Lys440. At Thr457 the chain carries Phosphothreonine. Phosphoserine is present on Ser460. The 118-residue stretch at 492 to 609 (LSDMVIYCKS…GYVLKPAFLR (118 aa)) folds into the PI-PLC Y-box domain. Substrate-binding residues include Ser522 and Arg549. One can recognise a C2 domain in the interval 611-737 (PNGTFNPRAL…QGYRHVHLMS (127 aa)). Ca(2+)-binding residues include Ile651, Asp653, Asn677, Asp706, Tyr707, and Asp708.

In terms of assembly, interacts with TGM2. Ca(2+) serves as cofactor. Strongly expressed in lung, liver and heart. Also expressed at least in pancreas, kidney, skeletal muscle, placenta and brain.

It catalyses the reaction a 1,2-diacyl-sn-glycero-3-phospho-(1D-myo-inositol-4,5-bisphosphate) + H2O = 1D-myo-inositol 1,4,5-trisphosphate + a 1,2-diacyl-sn-glycerol + H(+). The catalysed reaction is a 1,2-diacyl-sn-glycero-3-phospho-(1D-myo-inositol) + H2O = 1D-myo-inositol 1-phosphate + a 1,2-diacyl-sn-glycerol + H(+). The production of the second messenger molecules diacylglycerol (DAG) and inositol 1,4,5-trisphosphate (IP3) is mediated by activated phosphatidylinositol-specific phospholipase C enzymes. Essential for trophoblast and placental development. Binds phosphatidylinositol 4,5-bisphosphate. This Homo sapiens (Human) protein is 1-phosphatidylinositol 4,5-bisphosphate phosphodiesterase delta-1.